Consider the following 215-residue polypeptide: Proteasome subunit beta (215 aa).

Residues 1–12 constitute a propeptide, removed in mature form; by autocatalysis; that stretch reads MLGEIQDKVYKG. The active-site Nucleophile is Thr13.

This sequence belongs to the peptidase T1B family. As to quaternary structure, the 20S proteasome core is composed of 14 alpha and 14 beta subunits that assemble into four stacked heptameric rings, resulting in a barrel-shaped structure. The two inner rings, each composed of seven catalytic beta subunits, are sandwiched by two outer rings, each composed of seven alpha subunits. The catalytic chamber with the active sites is on the inside of the barrel. Has a gated structure, the ends of the cylinder being occluded by the N-termini of the alpha-subunits. Is capped at one or both ends by the proteasome regulatory ATPase, PAN.

It localises to the cytoplasm. It carries out the reaction Cleavage of peptide bonds with very broad specificity.. The formation of the proteasomal ATPase PAN-20S proteasome complex, via the docking of the C-termini of PAN into the intersubunit pockets in the alpha-rings, triggers opening of the gate for substrate entry. Interconversion between the open-gate and close-gate conformations leads to a dynamic regulation of the 20S proteasome proteolysis activity. In terms of biological role, component of the proteasome core, a large protease complex with broad specificity involved in protein degradation. The chain is Proteasome subunit beta from Archaeoglobus profundus (strain DSM 5631 / JCM 9629 / NBRC 100127 / Av18).